Consider the following 77-residue polypeptide: uncharacterized protein (77 aa).

An HTH cro/C1-type domain is found at 11–65 (FARLRREKGLTQEEVEARSGFSQQYLSSLERGRRNPTVITLYELAQALGVSHVEL). A DNA-binding region (H-T-H motif) is located at residues 22–41 (QEEVEARSGFSQQYLSSLER).

This is an uncharacterized protein from Sinorhizobium fredii (strain NBRC 101917 / NGR234).